A 125-amino-acid chain; its full sequence is Phosphoribosyl-AMP cyclohydrolase (125 aa).

Residue Asp74 coordinates Mg(2+). Position 75 (Cys75) interacts with Zn(2+). Asp76 and Asp78 together coordinate Mg(2+). Cys92 and Cys99 together coordinate Zn(2+).

This sequence belongs to the PRA-CH family. Homodimer. It depends on Mg(2+) as a cofactor. Zn(2+) serves as cofactor.

Its subcellular location is the cytoplasm. The enzyme catalyses 1-(5-phospho-beta-D-ribosyl)-5'-AMP + H2O = 1-(5-phospho-beta-D-ribosyl)-5-[(5-phospho-beta-D-ribosylamino)methylideneamino]imidazole-4-carboxamide. It functions in the pathway amino-acid biosynthesis; L-histidine biosynthesis; L-histidine from 5-phospho-alpha-D-ribose 1-diphosphate: step 3/9. In terms of biological role, catalyzes the hydrolysis of the adenine ring of phosphoribosyl-AMP. The polypeptide is Phosphoribosyl-AMP cyclohydrolase (Geobacter sulfurreducens (strain ATCC 51573 / DSM 12127 / PCA)).